The sequence spans 92 residues: Gene 80 protein (92 aa).

In Mycobacterium phage L5 (Mycobacteriophage L5), this protein is Gene 80 protein (80).